Consider the following 155-residue polypeptide: MSLNITENESISTAVIDAINSGATLKDINAIPDDMMDDIYSYAYDFYNKGRIEEAEVFFRFLCIYDFYNVDYIMGLAAIYQIKEQFQQAADLYAVAFALGKNDYTPVFHTGQCQLRLKAPLKAKECFELVIQHSNDEKLKIKAQSYLDAIQDIKE.

The protein belongs to the LcrH/SycD chaperone family.

It localises to the cytoplasm. Assists the correct folding of nascent IpaB. Once it is bound to IpaB, it binds to IpaC and impedes their premature association that would lead to their degradation in the absence of IpcG. The polypeptide is Chaperone protein IpgC (ipgC) (Shigella dysenteriae).